The sequence spans 398 residues: Probable aminomethyltransferase (398 aa).

It belongs to the GcvT family. As to quaternary structure, the glycine cleavage system is composed of four proteins: P, T, L and H.

It catalyses the reaction N(6)-[(R)-S(8)-aminomethyldihydrolipoyl]-L-lysyl-[protein] + (6S)-5,6,7,8-tetrahydrofolate = N(6)-[(R)-dihydrolipoyl]-L-lysyl-[protein] + (6R)-5,10-methylene-5,6,7,8-tetrahydrofolate + NH4(+). The glycine cleavage system catalyzes the degradation of glycine. This chain is Probable aminomethyltransferase, found in Thermococcus kodakarensis (strain ATCC BAA-918 / JCM 12380 / KOD1) (Pyrococcus kodakaraensis (strain KOD1)).